Consider the following 273-residue polypeptide: Dermonecrotic toxin LapSicTox-alphaIB1bi (273 aa).

His-5 is a catalytic residue. Positions 25 and 27 each coordinate Mg(2+). The active-site Nucleophile is the His-41. Disulfide bonds link Cys-45-Cys-51 and Cys-47-Cys-190. Asp-85 is a Mg(2+) binding site. 2 N-linked (GlcNAc...) asparagine glycosylation sites follow: Asn-189 and Asn-250.

Belongs to the arthropod phospholipase D family. Class II subfamily. It depends on Mg(2+) as a cofactor. In terms of tissue distribution, expressed by the venom gland.

It is found in the secreted. The catalysed reaction is an N-(acyl)-sphingosylphosphocholine = an N-(acyl)-sphingosyl-1,3-cyclic phosphate + choline. The enzyme catalyses an N-(acyl)-sphingosylphosphoethanolamine = an N-(acyl)-sphingosyl-1,3-cyclic phosphate + ethanolamine. It catalyses the reaction a 1-acyl-sn-glycero-3-phosphocholine = a 1-acyl-sn-glycero-2,3-cyclic phosphate + choline. It carries out the reaction a 1-acyl-sn-glycero-3-phosphoethanolamine = a 1-acyl-sn-glycero-2,3-cyclic phosphate + ethanolamine. Dermonecrotic toxins cleave the phosphodiester linkage between the phosphate and headgroup of certain phospholipids (sphingolipid and lysolipid substrates), forming an alcohol (often choline) and a cyclic phosphate. This toxin acts on sphingomyelin (SM). It may also act on ceramide phosphoethanolamine (CPE), lysophosphatidylcholine (LPC) and lysophosphatidylethanolamine (LPE), but not on lysophosphatidylserine (LPS), and lysophosphatidylglycerol (LPG). It acts by transphosphatidylation, releasing exclusively cyclic phosphate products as second products. Induces dermonecrosis, hemolysis, increased vascular permeability, edema, inflammatory response, and platelet aggregation. The chain is Dermonecrotic toxin LapSicTox-alphaIB1bi from Loxosceles apachea (Apache recluse spider).